We begin with the raw amino-acid sequence, 645 residues long: L-aspartate oxidase, chloroplastic (645 aa).

The transit peptide at 1 to 70 directs the protein to the chloroplast; it reads MAALMNGFGS…RMRHKVGSIR (70 aa). FAD-binding positions include 92-95, K114, 121-128, and D292; these read SGVA and NTNYAQGG. The Proton donor/acceptor role is filled by R368. FAD-binding positions include E453 and 469–470; that span reads SL.

Belongs to the FAD-dependent oxidoreductase 2 family. NadB subfamily. FAD is required as a cofactor.

It is found in the plastid. Its subcellular location is the chloroplast. The catalysed reaction is L-aspartate + O2 = iminosuccinate + H2O2. The protein operates within cofactor biosynthesis; NAD(+) biosynthesis; iminoaspartate from L-aspartate (oxidase route): step 1/1. Functionally, catalyzes the oxidation of L-aspartate to iminoaspartate. This Oryza sativa subsp. japonica (Rice) protein is L-aspartate oxidase, chloroplastic.